We begin with the raw amino-acid sequence, 276 residues long: Bis(5'-nucleosyl)-tetraphosphatase, symmetrical (276 aa).

This sequence belongs to the Ap4A hydrolase family.

The enzyme catalyses P(1),P(4)-bis(5'-adenosyl) tetraphosphate + H2O = 2 ADP + 2 H(+). In terms of biological role, hydrolyzes diadenosine 5',5'''-P1,P4-tetraphosphate to yield ADP. In Psychromonas ingrahamii (strain DSM 17664 / CCUG 51855 / 37), this protein is Bis(5'-nucleosyl)-tetraphosphatase, symmetrical.